The sequence spans 124 residues: Non-structural protein 2 (124 aa).

Positions 121–124 (DLNP) match the DLNP; interaction with MAP1B motif.

Belongs to the pneumovirus non-structural protein 2 family. In terms of assembly, monomer (instable). Homomultimer. Heteromultimer with NS1. Interacts with host RIGI (via N-terminus); this interaction prevents host signaling pathway involved in interferon production. Interacts with host MAP1B/microtubule-associated protein 1B.

Its subcellular location is the host mitochondrion. Functionally, plays a major role in antagonizing the type I IFN-mediated antiviral response. Acts cooperatively with NS1 to repress activation and nuclear translocation of host IFN-regulatory factor IRF3. Interacts with the host cytoplasmic sensor of viral nucleic acids RIGI and prevents the interaction with its downstream partner MAVS. Together with NS2, participates in the proteasomal degradation of host STAT2, IRF3, IRF7, TBK1 and RIGI through a NS-degradasome involving CUL2 and Elongin-C. The degradasome requires an intact mitochondrial MAVS. Induces host SOCS1 expression. Induces activation of NF-kappa-B. Suppresses premature apoptosis by an NF-kappa-B-dependent, interferon-independent mechanism promoting continued viral replication. In Human respiratory syncytial virus A (strain A2), this protein is Non-structural protein 2 (1B).